The chain runs to 75 residues: Metallothionein-like protein 1 (75 aa).

Belongs to the metallothionein superfamily. Type 15 family.

Functionally, metallothioneins have a high content of cysteine residues that bind various heavy metals. This Trifolium repens (Creeping white clover) protein is Metallothionein-like protein 1 (MT1B).